The following is a 777-amino-acid chain: MISSFSNGFWSKDYATGVKKLFDCLDNGVEENEQVKNLLKLYKEANEEFGEKLQEITKECLKGKKPENTEDGATSNKAFEGLRSEIANQGKQHIRIAKDLETLIIAPFSKMSIDHSQKLQTSQQVLTNQIKSYEKKYYTLKKTKSAYYNKCRNLEDYEEESKESNETTSEAITDLTTVSSPQQQSLLENDDDLIQLGFMEFRPEELKEVLAQVLQEIPLQDYRVPILGTYPNTCSGNIIVSWLQENLPVPTLVAAEAFGQDLIAQGFLRHMGVGGSFVNSTNFHYQWKDKAFQFAGLNSVDSLVENAKALPLVGEYLSDYISHRKLYSSETQSQRLKREVLDANKIYSESVVDLDKCRTLVEETIADHLQFLQKCETDRVLYYKDFFMDLSTIISNFLPSMKLLADQIVVYQEIIQPESDIRYILESAATGPFLPRVEIYEDYYNDIKDQIFGVDVEFLSHRDKKRVPIIVSTILSYLDLLYPTLASDEVRQNIWLVNSPLSSVHQLREALNHSSSVTKEVLSQYTPSVVIGVLKLYFLELPDSIVPSSAFELIRSIYMNHSNDTPYRLRLLQNLLSQLRRVNLATLSAIITHLNRLITLTPNKETFTINLANSLSLCISRPATWNLGIQHDKHPTKFMEDLLTYGPSIFEELRKLNSSKRVSDRVLYQSSATPRSTDVSPTRPDSISSVRSHTAVESPRSSFEELQPSEIPAESEFTLENVPTSLIRSSYALNTRKTRRNFSHSSASNESAAIFIDQDAKIVNEAVASRDSSLSGS.

Residues 3–420 (SSFSNGFWSK…YQEIIQPESD (418 aa)) enclose the F-BAR domain. The stretch at 117 to 172 (QKLQTSQQVLTNQIKSYEKKYYTLKKTKSAYYNKCRNLEDYEEESKESNETTSEAI) forms a coiled coil. Residues 213–296 (VLQEIPLQDY…WKDKAFQFAG (84 aa)) enclose the DEP domain. The region spanning 454–650 (VDVEFLSHRD…DLLTYGPSIF (197 aa)) is the Rho-GAP domain. The tract at residues 667–709 (LYQSSATPRSTDVSPTRPDSISSVRSHTAVESPRSSFEELQPS) is disordered. Residues 668–692 (YQSSATPRSTDVSPTRPDSISSVRS) show a composition bias toward polar residues. S676 and S680 each carry phosphoserine. Residue T682 is modified to Phosphothreonine. The residue at position 686 (S686) is a Phosphoserine. At T694 the chain carries Phosphothreonine. S698 bears the Phosphoserine mark.

As to quaternary structure, interacts with pak1/shk1. Post-translationally, phosphorylated by pak1/shk1.

The protein resides in the cytoplasm. Functionally, acts in signal transduction. Negatively regulates the pak1/shk1 control pathway. In Schizosaccharomyces pombe (strain 972 / ATCC 24843) (Fission yeast), this protein is Rho-GTPase-activating protein 8 (rga8).